The primary structure comprises 459 residues: Cysteine--tRNA ligase (459 aa).

Cys28 provides a ligand contact to Zn(2+). A 'HIGH' region motif is present at residues 30 to 40 (VTIYDLCHIGH). 3 residues coordinate Zn(2+): Cys209, His234, and Glu238. The short motif at 266–270 (KMSKS) is the 'KMSKS' region element. Residue Lys269 coordinates ATP.

This sequence belongs to the class-I aminoacyl-tRNA synthetase family. In terms of assembly, monomer. Requires Zn(2+) as cofactor.

It is found in the cytoplasm. The catalysed reaction is tRNA(Cys) + L-cysteine + ATP = L-cysteinyl-tRNA(Cys) + AMP + diphosphate. This is Cysteine--tRNA ligase from Shewanella baltica (strain OS155 / ATCC BAA-1091).